A 94-amino-acid polypeptide reads, in one-letter code: Co-chaperonin GroES (94 aa).

Belongs to the GroES chaperonin family. In terms of assembly, heptamer of 7 subunits arranged in a ring. Interacts with the chaperonin GroEL.

The protein resides in the cytoplasm. Its function is as follows. Together with the chaperonin GroEL, plays an essential role in assisting protein folding. The GroEL-GroES system forms a nano-cage that allows encapsulation of the non-native substrate proteins and provides a physical environment optimized to promote and accelerate protein folding. GroES binds to the apical surface of the GroEL ring, thereby capping the opening of the GroEL channel. The protein is Co-chaperonin GroES of Streptococcus pneumoniae (strain ATCC 700669 / Spain 23F-1).